Consider the following 159-residue polypeptide: Protransforming growth factor alpha (159 aa).

An N-terminal signal peptide occupies residues 1-23 (MVPATGQLALLALGILLAVCQAL). The propeptide at 24–38 (ENSTSPLSDSPVAAA) is removed in mature form. Over 24–97 (ENSTSPLSDS…AVVAASQKKQ (74 aa)) the chain is Extracellular. Asparagine 25 carries N-linked (GlcNAc...) asparagine glycosylation. In terms of domain architecture, EGF-like spans 44 to 83 (NKCPDSHTQYCFHGTCRFLVQEEKPACVCHSGYVGVRCEH). Intrachain disulfides connect cysteine 46/cysteine 59, cysteine 54/cysteine 70, and cysteine 72/cysteine 81. The propeptide at 89 to 159 (VVAASQKKQA…TACCHSETVV (71 aa)) is removed in mature form. Residues 98 to 123 (AITALVVVSIVALAVLIITCVLIHCC) form a helical membrane-spanning segment. Residues 124–159 (QLRKHCEWCRALVCRHEKPSALLKGRTACCHSETVV) lie on the Cytoplasmic side of the membrane. S-palmitoyl cysteine attachment occurs at residues cysteine 152 and cysteine 153.

As to quaternary structure, interacts with the PDZ domains of SDCBP and SNTA1. The interaction with SDCBP, is required for the targeting to the cell surface. In the endoplasmic reticulum, in its immature form (i.e. with a prosegment and lacking full N-glycosylation), interacts with CNIH. In the Golgi apparatus, may form a complex with CNIH and GORASP2. Interacts (via cytoplasmic C-terminal domain) with NKD2. Interacts with MAGI3.

It localises to the secreted. It is found in the extracellular space. The protein localises to the cell membrane. TGF alpha is a mitogenic polypeptide that is able to bind to the EGF receptor/EGFR and to act synergistically with TGF beta to promote anchorage-independent cell proliferation in soft agar. The polypeptide is Protransforming growth factor alpha (Tgfa) (Mus musculus (Mouse)).